Consider the following 307-residue polypeptide: Acetaldehyde dehydrogenase (307 aa).

Ser-12 to Ile-15 is a binding site for NAD(+). The active-site Acyl-thioester intermediate is the Cys-130. NAD(+) is bound by residues Ser-161–Asn-169 and Asn-272.

This sequence belongs to the acetaldehyde dehydrogenase family.

It catalyses the reaction acetaldehyde + NAD(+) + CoA = acetyl-CoA + NADH + H(+). This Shewanella halifaxensis (strain HAW-EB4) protein is Acetaldehyde dehydrogenase.